We begin with the raw amino-acid sequence, 123 residues long: Large ribosomal subunit protein bL19 (123 aa).

Belongs to the bacterial ribosomal protein bL19 family.

In terms of biological role, this protein is located at the 30S-50S ribosomal subunit interface and may play a role in the structure and function of the aminoacyl-tRNA binding site. The polypeptide is Large ribosomal subunit protein bL19 (Laribacter hongkongensis (strain HLHK9)).